Here is a 234-residue protein sequence, read N- to C-terminus: Ammonia monooxygenase gamma subunit (234 aa).

Positions 1–20 are cleaved as a signal peptide; the sequence is MRMIKFLLLAILLAPFVAHS. The 156-residue stretch at 38-193 folds into the Cytochrome c domain; that stretch reads ESLQRGAKGF…RFVADLVNYM (156 aa). Positions 51, 54, and 55 each coordinate heme c. The chain crosses the membrane as a helical span at residues 206–226; it reads ELGITVLLFLFGMLGLTYLLK.

The protein belongs to the cytochrome c family. In terms of assembly, the soluble ammonia monooxygenase is a nonamer composed of three alpha subunits (AmoA), three beta subunits (AmoB) and three gamma subunits (Cytochrome c1 PetC). Heme c serves as cofactor.

It is found in the cell membrane. Its subcellular location is the cytoplasm. Part of the ammonia monooxygenase complex, which catalyzes the oxidation of ammonia to hydroxylamine, the first reaction in the process of ammonia oxidation to nitrite. This Nitrosomonas europaea (strain ATCC 19718 / CIP 103999 / KCTC 2705 / NBRC 14298) protein is Ammonia monooxygenase gamma subunit.